Consider the following 631-residue polypeptide: Phosphomethylpyrimidine synthase (631 aa).

Substrate is bound by residues Asn-239, Met-268, Tyr-297, His-333, 353–355 (SRG), 394–397 (DGLR), and Glu-433. Residue His-437 participates in Zn(2+) binding. Residue Tyr-460 coordinates substrate. His-501 is a binding site for Zn(2+). [4Fe-4S] cluster contacts are provided by Cys-581, Cys-584, and Cys-589.

This sequence belongs to the ThiC family. As to quaternary structure, homodimer. [4Fe-4S] cluster is required as a cofactor.

The catalysed reaction is 5-amino-1-(5-phospho-beta-D-ribosyl)imidazole + S-adenosyl-L-methionine = 4-amino-2-methyl-5-(phosphooxymethyl)pyrimidine + CO + 5'-deoxyadenosine + formate + L-methionine + 3 H(+). It functions in the pathway cofactor biosynthesis; thiamine diphosphate biosynthesis. Catalyzes the synthesis of the hydroxymethylpyrimidine phosphate (HMP-P) moiety of thiamine from aminoimidazole ribotide (AIR) in a radical S-adenosyl-L-methionine (SAM)-dependent reaction. This Ralstonia nicotianae (strain ATCC BAA-1114 / GMI1000) (Ralstonia solanacearum) protein is Phosphomethylpyrimidine synthase.